We begin with the raw amino-acid sequence, 227 residues long: ATP-dependent dethiobiotin synthetase BioD (227 aa).

An ATP-binding site is contributed by 13 to 18; that stretch reads EVGKSV. Position 17 (serine 17) interacts with Mg(2+). Lysine 38 is an active-site residue. Serine 42 is a substrate binding site. Residues aspartate 55, 116-119, and 176-177 each bind ATP; these read EGAG and ND. Mg(2+) is bound by residues aspartate 55 and glutamate 116.

This sequence belongs to the dethiobiotin synthetase family. As to quaternary structure, homodimer. Mg(2+) serves as cofactor.

The protein resides in the cytoplasm. The catalysed reaction is (7R,8S)-7,8-diammoniononanoate + CO2 + ATP = (4R,5S)-dethiobiotin + ADP + phosphate + 3 H(+). Its pathway is cofactor biosynthesis; biotin biosynthesis; biotin from 7,8-diaminononanoate: step 1/2. Catalyzes a mechanistically unusual reaction, the ATP-dependent insertion of CO2 between the N7 and N8 nitrogen atoms of 7,8-diaminopelargonic acid (DAPA, also called 7,8-diammoniononanoate) to form a ureido ring. This is ATP-dependent dethiobiotin synthetase BioD from Serratia marcescens.